The following is a 197-amino-acid chain: Peptidyl-tRNA hydrolase (197 aa).

TRNA is bound at residue Tyr-17. His-22 (proton acceptor) is an active-site residue. TRNA-binding residues include Phe-68, Asn-70, and Asn-116.

The protein belongs to the PTH family. As to quaternary structure, monomer.

The protein resides in the cytoplasm. It catalyses the reaction an N-acyl-L-alpha-aminoacyl-tRNA + H2O = an N-acyl-L-amino acid + a tRNA + H(+). Its function is as follows. Hydrolyzes ribosome-free peptidyl-tRNAs (with 1 or more amino acids incorporated), which drop off the ribosome during protein synthesis, or as a result of ribosome stalling. In terms of biological role, catalyzes the release of premature peptidyl moieties from peptidyl-tRNA molecules trapped in stalled 50S ribosomal subunits, and thus maintains levels of free tRNAs and 50S ribosomes. In Yersinia enterocolitica serotype O:8 / biotype 1B (strain NCTC 13174 / 8081), this protein is Peptidyl-tRNA hydrolase.